Here is a 189-residue protein sequence, read N- to C-terminus: Peptidyl-tRNA hydrolase (189 aa).

Residue Tyr-15 participates in tRNA binding. Residue His-20 is the Proton acceptor of the active site. Phe-66, Asn-68, and Asn-114 together coordinate tRNA.

The protein belongs to the PTH family. Monomer.

Its subcellular location is the cytoplasm. The catalysed reaction is an N-acyl-L-alpha-aminoacyl-tRNA + H2O = an N-acyl-L-amino acid + a tRNA + H(+). Its function is as follows. Hydrolyzes ribosome-free peptidyl-tRNAs (with 1 or more amino acids incorporated), which drop off the ribosome during protein synthesis, or as a result of ribosome stalling. Functionally, catalyzes the release of premature peptidyl moieties from peptidyl-tRNA molecules trapped in stalled 50S ribosomal subunits, and thus maintains levels of free tRNAs and 50S ribosomes. The protein is Peptidyl-tRNA hydrolase of Streptococcus equi subsp. zooepidemicus (strain MGCS10565).